A 251-amino-acid chain; its full sequence is MLQTMKTLTLIPARLGSTRLPNKPLADICGKPMIVHVADRAAAAKLGRTVIATDSEEIFKVVAAHGHEAIMTRGDHESGSDRIYEALAKLDPSGEVDAVVNVQGDLPTIDPDTIRRALLPLEDGPADIATLGVEITVEEEKTNPNVVKIVGSPLAGNRRLRALYFTRATAPYGEGPLYHHIGLYAYRRSALERFVKLGPSPLEKREKLEQLRALEAGMRIDVEIVKTVPLGVDTQADLDRARTFCSQAGTI.

The protein belongs to the KdsB family.

Its subcellular location is the cytoplasm. The enzyme catalyses 3-deoxy-alpha-D-manno-oct-2-ulosonate + CTP = CMP-3-deoxy-beta-D-manno-octulosonate + diphosphate. It functions in the pathway nucleotide-sugar biosynthesis; CMP-3-deoxy-D-manno-octulosonate biosynthesis; CMP-3-deoxy-D-manno-octulosonate from 3-deoxy-D-manno-octulosonate and CTP: step 1/1. Its pathway is bacterial outer membrane biogenesis; lipopolysaccharide biosynthesis. Activates KDO (a required 8-carbon sugar) for incorporation into bacterial lipopolysaccharide in Gram-negative bacteria. The polypeptide is 3-deoxy-manno-octulosonate cytidylyltransferase (Brucella ovis (strain ATCC 25840 / 63/290 / NCTC 10512)).